Here is a 290-residue protein sequence, read N- to C-terminus: 3-hydroxyacyl-thioester dehydratase Y (290 aa).

Positions 147–169 (FGGARGERPAAPEFPDRHPDARI) are disordered. Residues 151–169 (RGERPAAPEFPDRHPDARI) show a composition bias toward basic and acidic residues. Residues 161–271 (PDRHPDARID…AVFRTEVAGS (111 aa)) enclose the MaoC-like domain.

The protein belongs to the enoyl-CoA hydratase/isomerase family.

It carries out the reaction a (3R)-3-hydroxyacyl-CoA = a (2E)-enoyl-CoA + H2O. It catalyses the reaction (3R)-hydroxyhexanoyl-CoA = (2E)-hexenoyl-CoA + H2O. The catalysed reaction is (2E)-octenoyl-CoA + H2O = (3R)-hydroxyoctanoyl-CoA. The enzyme catalyses (3R)-3-hydroxydecanoyl-CoA = (2E)-decenoyl-CoA + H2O. It carries out the reaction (3R)-3-hydroxydodecanoyl-CoA = (2E)-dodecenoyl-CoA + H2O. It catalyses the reaction (3R)-hydroxyhexadecanoyl-CoA = (2E)-hexadecenoyl-CoA + H2O. Its function is as follows. Shows trans-enoyl-CoA hydratase/3-hydroxyacyl-CoA dehydratase activity. In vitro, can hydrate various enoyl-CoA such as (2E)-hexenoyl-CoA, (2E)-octenoyl-CoA, (2E)-decenoyl-CoA, (2E)-dodecenoyl-CoA and (2E)-hexadecenoyl-CoA. May contribute to the persistence of the tuberculosis infection by inducing COX-2 expression in macrophages through MAPK-NF-kappaB signaling pathway. This chain is 3-hydroxyacyl-thioester dehydratase Y, found in Mycobacterium tuberculosis (strain ATCC 25618 / H37Rv).